Here is a 56-residue protein sequence, read N- to C-terminus: MFDHRILEILVCPLTKDKLQYNKDTNELISEKAKLAFPIRDGIPIMLIDEARKLEE.

This sequence belongs to the UPF0434 family.

This is UPF0434 protein ECH_0194 from Ehrlichia chaffeensis (strain ATCC CRL-10679 / Arkansas).